We begin with the raw amino-acid sequence, 310 residues long: Thioredoxin reductase (310 aa).

34–41 (NGMQPGGQ) is a binding site for FAD. C135 and C138 form a disulfide bridge. 281 to 290 (DVQDKIYRQA) contacts FAD.

The protein belongs to the class-II pyridine nucleotide-disulfide oxidoreductase family. In terms of assembly, homodimer. The cofactor is FAD.

The protein localises to the cytoplasm. It carries out the reaction [thioredoxin]-dithiol + NADP(+) = [thioredoxin]-disulfide + NADPH + H(+). The polypeptide is Thioredoxin reductase (trxB) (Rickettsia typhi (strain ATCC VR-144 / Wilmington)).